The following is a 351-amino-acid chain: Protein pelota homolog (351 aa).

This sequence belongs to the eukaryotic release factor 1 family. Pelota subfamily. Monomer. A divalent metal cation serves as cofactor.

The protein localises to the cytoplasm. May function in recognizing stalled ribosomes, interact with stem-loop structures in stalled mRNA molecules, and effect endonucleolytic cleavage of the mRNA. May play a role in the release non-functional ribosomes and degradation of damaged mRNAs. Has endoribonuclease activity. The polypeptide is Protein pelota homolog (Methanosphaera stadtmanae (strain ATCC 43021 / DSM 3091 / JCM 11832 / MCB-3)).